The chain runs to 367 residues: 2-aminoethylphosphonate--pyruvate transaminase (367 aa).

At lysine 194 the chain carries N6-(pyridoxal phosphate)lysine.

This sequence belongs to the class-V pyridoxal-phosphate-dependent aminotransferase family. PhnW subfamily. In terms of assembly, homodimer. Pyridoxal 5'-phosphate is required as a cofactor.

It catalyses the reaction (2-aminoethyl)phosphonate + pyruvate = phosphonoacetaldehyde + L-alanine. Functionally, involved in phosphonate degradation. The chain is 2-aminoethylphosphonate--pyruvate transaminase from Salmonella paratyphi A (strain ATCC 9150 / SARB42).